Reading from the N-terminus, the 374-residue chain is Calcium/calmodulin-dependent protein kinase type 1 (374 aa).

One can recognise a Protein kinase domain in the interval 20-276 (YDFRDVLGTG…CEQALQHPWI (257 aa)). ATP-binding positions include 26–34 (LGTGAFSEV) and Lys49. Lys59 participates in a covalent cross-link: Glycyl lysine isopeptide (Lys-Gly) (interchain with G-Cter in ubiquitin). The Proton acceptor role is filled by Asp141. The residue at position 177 (Thr177) is a Phosphothreonine; by CaMKK1 and CaMKK2. The short motif at 263–264 (KR) is the Involved in nuclear import element. Residues 276 to 316 (IAGDTALDKNIHQSVSEQIKKNFAKSKWKQAFNATAVVRHM) are autoinhibitory domain. The calmodulin-binding stretch occupies residues 296–317 (KNFAKSKWKQAFNATAVVRHMR). The Nuclear export signal motif lies at 315–321 (HMRKLQL).

It belongs to the protein kinase superfamily. CAMK Ser/Thr protein kinase family. CaMK subfamily. In terms of assembly, monomer. Interacts with XPO1. Post-translationally, phosphorylated by CaMKK1 and CaMKK2 on Thr-177. In terms of processing, polybiquitinated by the E3 ubiquitin-protein ligase complex SCF(FBXL12), leading to proteasomal degradation. As to expression, widely expressed.

The protein resides in the cytoplasm. It is found in the nucleus. The enzyme catalyses L-seryl-[protein] + ATP = O-phospho-L-seryl-[protein] + ADP + H(+). It catalyses the reaction L-threonyl-[protein] + ATP = O-phospho-L-threonyl-[protein] + ADP + H(+). With respect to regulation, activated by Ca(2+)/calmodulin. Binding of calmodulin results in conformational change that relieves intrasteric autoinhibition and allows phosphorylation of Thr-177 within the activation loop by CaMKK1 or CaMKK2. Phosphorylation of Thr-177 results in several fold increase in total activity. Unlike CaMK4, is unable to exhibit autonomous activity after Ca(2+)/calmodulin activation. Functionally, calcium/calmodulin-dependent protein kinase that operates in the calcium-triggered CaMKK-CaMK1 signaling cascade and, upon calcium influx, regulates transcription activators activity, cell cycle, hormone production, cell differentiation, actin filament organization and neurite outgrowth. Recognizes the substrate consensus sequence [MVLIF]-x-R-x(2)-[ST]-x(3)-[MVLIF]. Regulates axonal extension and growth cone motility in hippocampal and cerebellar nerve cells. Upon NMDA receptor-mediated Ca(2+) elevation, promotes dendritic growth in hippocampal neurons and is essential in synapses for full long-term potentiation (LTP) and ERK2-dependent translational activation. Downstream of NMDA receptors, promotes the formation of spines and synapses in hippocampal neurons by phosphorylating ARHGEF7/BETAPIX on 'Ser-516', which results in the enhancement of ARHGEF7 activity and activation of RAC1. Promotes neuronal differentiation and neurite outgrowth by activation and phosphorylation of MARK2 on 'Ser-91', 'Ser-92', 'Ser-93' and 'Ser-294'. Promotes nuclear export of HDAC5 and binding to 14-3-3 by phosphorylation of 'Ser-259' and 'Ser-498' in the regulation of muscle cell differentiation. Regulates NUMB-mediated endocytosis by phosphorylation of NUMB on 'Ser-275' and 'Ser-294'. Involved in the regulation of basal and estrogen-stimulated migration of medulloblastoma cells through ARHGEF7/BETAPIX phosphorylation. Is required for proper activation of cyclin-D1/CDK4 complex during G1 progression in diploid fibroblasts. Plays a role in K(+) and ANG2-mediated regulation of the aldosterone synthase (CYP11B2) to produce aldosterone in the adrenal cortex. Phosphorylates EIF4G3/eIF4GII. In vitro phosphorylates CREB1, ATF1, CFTR, MYL9 and SYN1/synapsin I. This chain is Calcium/calmodulin-dependent protein kinase type 1 (Camk1), found in Rattus norvegicus (Rat).